Here is a 67-residue protein sequence, read N- to C-terminus: Small ribosomal subunit protein eS17 (67 aa).

The protein belongs to the eukaryotic ribosomal protein eS17 family.

This Korarchaeum cryptofilum (strain OPF8) protein is Small ribosomal subunit protein eS17.